A 474-amino-acid polypeptide reads, in one-letter code: GTPase Der (474 aa).

2 EngA-type G domains span residues 3–167 (FTVA…GVDR) and 204–379 (LRVA…MVWN). GTP-binding positions include 9-16 (GRPNVGKS), 56-60 (DTAGL), 119-122 (NKSE), 210-217 (GRPNAGKS), 257-261 (DTAGM), and 322-325 (NKWD). The region spanning 380–464 (KRISTAKLNR…PIRIHLKASE (85 aa)) is the KH-like domain.

This sequence belongs to the TRAFAC class TrmE-Era-EngA-EngB-Septin-like GTPase superfamily. EngA (Der) GTPase family. As to quaternary structure, associates with the 50S ribosomal subunit.

Its function is as follows. GTPase that plays an essential role in the late steps of ribosome biogenesis. The chain is GTPase Der from Allorhizobium ampelinum (strain ATCC BAA-846 / DSM 112012 / S4) (Agrobacterium vitis (strain S4)).